An 84-amino-acid polypeptide reads, in one-letter code: U4-theraphotoxin-Hhn1a (84 aa).

The N-terminal stretch at 1–22 (MKVTLIAILTCAAVLVLHTTAA) is a signal peptide. Residues 23–47 (EELEESQLMEVGMPDTELAAVDGER) constitute a propeptide that is removed on maturation. Intrachain disulfides connect Cys-51–Cys-65, Cys-55–Cys-76, and Cys-70–Cys-81.

Belongs to the neurotoxin 12 (Hwtx-2) family. 02 (Hwtx-2) subfamily. As to expression, expressed by the venom gland.

It is found in the secreted. Postsynaptic neurotoxin. This Cyriopagopus hainanus (Chinese bird spider) protein is U4-theraphotoxin-Hhn1a.